The following is a 370-amino-acid chain: Ferrochelatase (370 aa).

H210 and E291 together coordinate Fe cation.

It belongs to the ferrochelatase family.

The protein resides in the cytoplasm. It catalyses the reaction heme b + 2 H(+) = protoporphyrin IX + Fe(2+). It participates in porphyrin-containing compound metabolism; protoheme biosynthesis; protoheme from protoporphyrin-IX: step 1/1. In terms of biological role, catalyzes the ferrous insertion into protoporphyrin IX. The protein is Ferrochelatase of Marinobacter nauticus (strain ATCC 700491 / DSM 11845 / VT8) (Marinobacter aquaeolei).